Here is a 272-residue protein sequence, read N- to C-terminus: Formamidopyrimidine-DNA glycosylase (272 aa).

The Schiff-base intermediate with DNA role is filled by Pro2. The active-site Proton donor is the Glu3. Lys57 serves as the catalytic Proton donor; for beta-elimination activity. DNA-binding residues include His90, Arg109, and Lys150. Residues 235–269 form an FPG-type zinc finger; that stretch reads HVYGRAKKKCLLCSSIIQEEKIGQRNTFWCGHCQP. Arg259 (proton donor; for delta-elimination activity) is an active-site residue.

Belongs to the FPG family. In terms of assembly, monomer. Requires Zn(2+) as cofactor.

The catalysed reaction is Hydrolysis of DNA containing ring-opened 7-methylguanine residues, releasing 2,6-diamino-4-hydroxy-5-(N-methyl)formamidopyrimidine.. It carries out the reaction 2'-deoxyribonucleotide-(2'-deoxyribose 5'-phosphate)-2'-deoxyribonucleotide-DNA = a 3'-end 2'-deoxyribonucleotide-(2,3-dehydro-2,3-deoxyribose 5'-phosphate)-DNA + a 5'-end 5'-phospho-2'-deoxyribonucleoside-DNA + H(+). In terms of biological role, involved in base excision repair of DNA damaged by oxidation or by mutagenic agents. Acts as a DNA glycosylase that recognizes and removes damaged bases. Has a preference for oxidized purines, such as 7,8-dihydro-8-oxoguanine (8-oxoG). Has AP (apurinic/apyrimidinic) lyase activity and introduces nicks in the DNA strand. Cleaves the DNA backbone by beta-delta elimination to generate a single-strand break at the site of the removed base with both 3'- and 5'-phosphates. The chain is Formamidopyrimidine-DNA glycosylase from Aliivibrio fischeri (strain ATCC 700601 / ES114) (Vibrio fischeri).